The following is a 166-amino-acid chain: Small ribosomal subunit protein uS5 (166 aa).

The region spanning 11 to 74 is the S5 DRBM domain; sequence LQEKLIAVNR…EKARRNMINV (64 aa).

The protein belongs to the universal ribosomal protein uS5 family. As to quaternary structure, part of the 30S ribosomal subunit. Contacts proteins S4 and S8.

Functionally, with S4 and S12 plays an important role in translational accuracy. Its function is as follows. Located at the back of the 30S subunit body where it stabilizes the conformation of the head with respect to the body. In Mannheimia succiniciproducens (strain KCTC 0769BP / MBEL55E), this protein is Small ribosomal subunit protein uS5.